We begin with the raw amino-acid sequence, 61 residues long: Early E3 6.4 kDa protein (61 aa).

Positions 1–25 (MGNAGPLKLHTITKPGTIPYPPHGS) are disordered.

This Homo sapiens (Human) protein is Early E3 6.4 kDa protein.